Reading from the N-terminus, the 213-residue chain is Vacuolar protein sorting-associated protein 32 homolog 1 (213 aa).

Coiled coils occupy residues 11–42 (KQET…KKAT) and 118–176 (TNID…QLLQ). A disordered region spans residues 180–213 (IHVPQGNKPARAPAQKQPTAEEDELAALQAEMAL).

This sequence belongs to the SNF7 family. Component of the endosomal sorting required for transport complex III (ESCRT-III), composed at least of VPS2, VPS20, VPS24 and VPS32. Interacts with SKD1. Interacts with BRO1/ALIX.

It is found in the endosome. Functionally, component of the ESCRT-III complex, which is required for multivesicular bodies (MVBs) formation and sorting of endosomal cargo proteins into MVBs. The ESCRT-III complex is probably involved in the concentration of MVB cargo. The polypeptide is Vacuolar protein sorting-associated protein 32 homolog 1 (VPS32.1) (Arabidopsis thaliana (Mouse-ear cress)).